Consider the following 80-residue polypeptide: RNA-binding protein Hfq (80 aa).

In terms of domain architecture, Sm spans 10 to 69 (DPFLNLLRKEHVPVSIYLVNGIKLQGHIESFDQYVVLLRNTVTQMVYKHAISTVVPGRPV).

The protein belongs to the Hfq family. Homohexamer.

Its function is as follows. RNA chaperone that binds small regulatory RNA (sRNAs) and mRNAs to facilitate mRNA translational regulation in response to envelope stress, environmental stress and changes in metabolite concentrations. Also binds with high specificity to tRNAs. This chain is RNA-binding protein Hfq, found in Leptothrix cholodnii (strain ATCC 51168 / LMG 8142 / SP-6) (Leptothrix discophora (strain SP-6)).